A 215-amino-acid chain; its full sequence is Large ribosomal subunit protein uL3c (215 aa).

A disordered region spans residues 132 to 151 (RGAMSHGSKSHRRPGSIGAG).

It belongs to the universal ribosomal protein uL3 family. In terms of assembly, part of the 50S ribosomal subunit.

It localises to the plastid. The protein resides in the chloroplast. Its function is as follows. One of the primary rRNA binding proteins, it binds directly near the 3'-end of the 23S rRNA, where it nucleates assembly of the 50S subunit. The sequence is that of Large ribosomal subunit protein uL3c (rpl3) from Cyanidium caldarium (Red alga).